Reading from the N-terminus, the 300-residue chain is Erythroblast NAD(P)(+)--arginine ADP-ribosyltransferase (300 aa).

Positions 1-22 (MEEPLLHAILGLVLLLSTRTDA) are cleaved as a signal peptide. Disulfide bonds link cysteine 51–cysteine 260 and cysteine 159–cysteine 208. Residues 70-256 (ETFAEGWRSA…IQLRSQGKSS (187 aa)) enclose the TR mART core domain. NAD(+) is bound by residues tyrosine 107, arginine 164, and glutamine 183. The active site involves arginine 164. Serine 186 is a catalytic residue. Serine 217 is a binding site for NAD(+). Glutamate 224 is a catalytic residue. The segment at 276–300 (SADKSSPLPRSPWPGWAPLAAPHSH) is disordered.

Belongs to the Arg-specific ADP-ribosyltransferase family.

It carries out the reaction L-arginyl-[protein] + NAD(+) = N(omega)-(ADP-D-ribosyl)-L-arginyl-[protein] + nicotinamide + H(+). The protein is Erythroblast NAD(P)(+)--arginine ADP-ribosyltransferase (MADPRT) of Gallus gallus (Chicken).